The following is a 143-amino-acid chain: Transcriptional regulator MraZ (143 aa).

SpoVT-AbrB domains lie at 5–47 (EFEH…PMTE) and 76–119 (ATEC…SAER).

The protein belongs to the MraZ family. As to quaternary structure, forms oligomers.

It localises to the cytoplasm. Its subcellular location is the nucleoid. In Levilactobacillus brevis (strain ATCC 367 / BCRC 12310 / CIP 105137 / JCM 1170 / LMG 11437 / NCIMB 947 / NCTC 947) (Lactobacillus brevis), this protein is Transcriptional regulator MraZ.